The following is a 188-amino-acid chain: Elongation factor P (188 aa).

K34 is subject to N6-(3,6-diaminohexanoyl)-5-hydroxylysine.

This sequence belongs to the elongation factor P family. May be beta-lysylated on the epsilon-amino group of Lys-34 by the combined action of EpmA and EpmB, and then hydroxylated on the C5 position of the same residue by EpmC (if this protein is present). Lysylation is critical for the stimulatory effect of EF-P on peptide-bond formation. The lysylation moiety may extend toward the peptidyltransferase center and stabilize the terminal 3-CCA end of the tRNA. Hydroxylation of the C5 position on Lys-34 may allow additional potential stabilizing hydrogen-bond interactions with the P-tRNA.

It is found in the cytoplasm. The protein operates within protein biosynthesis; polypeptide chain elongation. In terms of biological role, involved in peptide bond synthesis. Alleviates ribosome stalling that occurs when 3 or more consecutive Pro residues or the sequence PPG is present in a protein, possibly by augmenting the peptidyl transferase activity of the ribosome. Modification of Lys-34 is required for alleviation. In Methylococcus capsulatus (strain ATCC 33009 / NCIMB 11132 / Bath), this protein is Elongation factor P.